The chain runs to 359 residues: Phosphate acyltransferase (359 aa).

The interval 337-359 (AAGAAQPAPETEVPGAHPSPHVA) is disordered.

This sequence belongs to the PlsX family. Homodimer. Probably interacts with PlsY.

It is found in the cytoplasm. It carries out the reaction a fatty acyl-[ACP] + phosphate = an acyl phosphate + holo-[ACP]. It functions in the pathway lipid metabolism; phospholipid metabolism. In terms of biological role, catalyzes the reversible formation of acyl-phosphate (acyl-PO(4)) from acyl-[acyl-carrier-protein] (acyl-ACP). This enzyme utilizes acyl-ACP as fatty acyl donor, but not acyl-CoA. This is Phosphate acyltransferase from Cupriavidus necator (strain ATCC 17699 / DSM 428 / KCTC 22496 / NCIMB 10442 / H16 / Stanier 337) (Ralstonia eutropha).